The sequence spans 488 residues: Gamma-aminobutyric acid receptor subunit beta-4 (488 aa).

A signal peptide spans 1 to 25 (MWTFQADRLSGIVSALAALCVACCA). Residues 26-244 (QSPSTGNISV…SFRIKRNIGY (219 aa)) lie on the Extracellular side of the membrane. 4 N-linked (GlcNAc...) asparagine glycosylation sites follow: N32, N104, N173, and N195. C160 and C174 are joined by a disulfide. The next 3 membrane-spanning stretches (helical) occupy residues 245 to 266 (FILQ…SFWI), 271 to 292 (SAAR…NTHL), and 304 to 326 (AIDV…YAFV). Residues 327–465 (NYIFFGRGPR…DLTDVSTIDK (139 aa)) lie on the Cytoplasmic side of the membrane. A helical transmembrane segment spans residues 466 to 487 (WSRIIFPITFGFFNLVYWLYYV).

This sequence belongs to the ligand-gated ion channel (TC 1.A.9) family. Gamma-aminobutyric acid receptor (TC 1.A.9.5) subfamily. GABRB4 sub-subfamily. As to quaternary structure, generally pentameric. There are five types of GABA(A) receptor chains: alpha, beta, gamma, delta, and rho.

Its subcellular location is the postsynaptic cell membrane. It localises to the cell membrane. GABA, the major inhibitory neurotransmitter in the vertebrate brain, mediates neuronal inhibition by binding to the GABA/benzodiazepine receptor and opening an integral chloride channel. The polypeptide is Gamma-aminobutyric acid receptor subunit beta-4 (GABRB4) (Gallus gallus (Chicken)).